The sequence spans 789 residues: Ent-kaurene synthase TSP4, chloroplastic (789 aa).

Positions 540 and 544 each coordinate Mg(2+). The short motif at 540–544 is the DDXXD motif element; sequence DDFFD. The chain crosses the membrane as a helical span at residues 638–656; the sequence is AYVSFALGPIVLPALYLVG. Asn-684, Arg-687, and Glu-692 together coordinate Mg(2+).

This sequence belongs to the terpene synthase family. It depends on Mg(2+) as a cofactor. As to expression, expressed in leaves and fruits, including trichomes.

The protein resides in the plastid. It is found in the chloroplast membrane. The catalysed reaction is ent-copalyl diphosphate = ent-kaur-16-ene + diphosphate. It participates in plant hormone biosynthesis; gibberellin biosynthesis. Involved in the biosynthesis of labdane-type diterpenoid including cleroda-dienols, and peregrinol lactones and furan derivatives, dopaminergic diterpenoids that can bind to dopamine receptors in the human pituitary gland, have probably ability to lower prolactin levels, and are used to treat menstrual cycle disorders (e.g. premenstrual syndrome and mastodynia). Terpene synthase that produces ent-kaurene from ent-copalyl diphosphate. This chain is Ent-kaurene synthase TSP4, chloroplastic, found in Vitex agnus-castus (Chaste tree).